Consider the following 1401-residue polypeptide: Lysine-specific demethylase 6A (1401 aa).

The tract at residues methionine 1 to lysine 1095 is interaction with SUPT6H. TPR repeat units follow at residues serine 95 to tyrosine 128, alanine 132 to phenylalanine 165, lysine 169 to threonine 203, alanine 207 to serine 240, alanine 245 to serine 285, glycine 286 to serine 319, aspartate 321 to histidine 353, and alanine 355 to serine 387. The span at alanine 439–glycine 453 shows a compositional bias: polar residues. Positions alanine 439–glutamine 463 are disordered. Arginine 519 and arginine 549 each carry omega-N-methylarginine. Composition is skewed to polar residues over residues asparagine 596–asparagine 606, histidine 619–glycine 642, and leucine 660–serine 743. A disordered region spans residues asparagine 596–glutamate 745. Serine 769 is modified (phosphoserine). 3 disordered regions span residues glycine 795 to glutamine 863, leucine 914 to proline 941, and phenylalanine 1043 to lysine 1080. The segment covering serine 814 to threonine 833 has biased composition (low complexity). Position 827 is a phosphothreonine (threonine 827). Serine 829 carries the phosphoserine modification. The segment covering glutamate 834 to histidine 848 has biased composition (polar residues). Pro residues predominate over residues cysteine 918–leucine 931. The span at serine 1046–serine 1063 shows a compositional bias: basic and acidic residues. In terms of domain architecture, JmjC spans lysine 1095–tryptophan 1258. Histidine 1146, glutamate 1148, and histidine 1226 together coordinate Fe cation. Zn(2+) is bound by residues cysteine 1331, cysteine 1334, cysteine 1358, and cysteine 1361.

It belongs to the UTX family. In terms of assembly, component of the MLL2/3 complex (also named ASCOM complex), at least composed of KMT2D/MLL2 or KMT2C/MLL3, ASH2L, RBBP5, WDR5, NCOA6, DPY30, KDM6A (or KDM6B), PAXIP1/PTIP, PAGR1 and alpha- and beta-tubulin. Interacts with TLE1. Interacts with SUPT6H. Interacts with SMARCA4. Interacts with PROSER1. Requires L-ascorbate as cofactor. Fe(2+) serves as cofactor. In terms of tissue distribution, expressed in brain, heart and spleen.

The protein resides in the nucleus. It carries out the reaction N(6),N(6),N(6)-trimethyl-L-lysyl(27)-[histone H3] + 2 2-oxoglutarate + 2 O2 = N(6)-methyl-L-lysyl(27)-[histone H3] + 2 formaldehyde + 2 succinate + 2 CO2. Histone demethylase that specifically demethylates 'Lys-27' of histone H3, thereby playing a central role in histone code. Demethylates trimethylated and dimethylated but not monomethylated H3 'Lys-27'. Plays a central role in regulation of posterior development, by regulating HOX gene expression. Demethylation of 'Lys-27' of histone H3 is concomitant with methylation of 'Lys-4' of histone H3, and regulates the recruitment of the PRC1 complex and monoubiquitination of histone H2A. Plays a demethylase-independent role in chromatin remodeling to regulate T-box family member-dependent gene expression. The chain is Lysine-specific demethylase 6A (Kdm6a) from Mus musculus (Mouse).